A 315-amino-acid chain; its full sequence is Ribosomal protein L11 methyltransferase (315 aa).

Thr163, Gly184, Asp206, and Asn248 together coordinate S-adenosyl-L-methionine.

It belongs to the methyltransferase superfamily. PrmA family.

The protein localises to the cytoplasm. It carries out the reaction L-lysyl-[protein] + 3 S-adenosyl-L-methionine = N(6),N(6),N(6)-trimethyl-L-lysyl-[protein] + 3 S-adenosyl-L-homocysteine + 3 H(+). In terms of biological role, methylates ribosomal protein L11. This chain is Ribosomal protein L11 methyltransferase, found in Lacticaseibacillus paracasei (strain ATCC 334 / BCRC 17002 / CCUG 31169 / CIP 107868 / KCTC 3260 / NRRL B-441) (Lactobacillus paracasei).